Consider the following 256-residue polypeptide: Type III pantothenate kinase (256 aa).

6 to 13 (DVGNTNIV) lines the ATP pocket. 107–110 (GADR) is a substrate binding site. Asp-109 serves as the catalytic Proton acceptor. Asp-129 serves as a coordination point for K(+). Thr-132 provides a ligand contact to ATP. Thr-184 is a substrate binding site.

Belongs to the type III pantothenate kinase family. In terms of assembly, homodimer. It depends on NH4(+) as a cofactor. The cofactor is K(+).

The protein localises to the cytoplasm. The catalysed reaction is (R)-pantothenate + ATP = (R)-4'-phosphopantothenate + ADP + H(+). Its pathway is cofactor biosynthesis; coenzyme A biosynthesis; CoA from (R)-pantothenate: step 1/5. In terms of biological role, catalyzes the phosphorylation of pantothenate (Pan), the first step in CoA biosynthesis. This chain is Type III pantothenate kinase, found in Pelotomaculum thermopropionicum (strain DSM 13744 / JCM 10971 / SI).